Reading from the N-terminus, the 115-residue chain is UPF0295 protein BLi00901/BL05075 (115 aa).

The next 2 membrane-spanning stretches (helical) occupy residues 18-38 and 41-61; these read LVFIGFIIMYVGVFFRSSVLL and VFMILGVLSILLSTAVYFWIG.

It belongs to the UPF0295 family.

The protein resides in the cell membrane. In Bacillus licheniformis (strain ATCC 14580 / DSM 13 / JCM 2505 / CCUG 7422 / NBRC 12200 / NCIMB 9375 / NCTC 10341 / NRRL NRS-1264 / Gibson 46), this protein is UPF0295 protein BLi00901/BL05075.